A 337-amino-acid polypeptide reads, in one-letter code: Hsp90 co-chaperone Cdc37-like 1 (337 aa).

The segment covering 1 to 11 (MEQPWPPPGPW) has biased composition (pro residues). A disordered region spans residues 1-42 (MEQPWPPPGPWSLPRAEGEAEEENDLDVFPSSPRCPQLPGGS). Residues 2–171 (EQPWPPPGPW…YEQKIRHFGM (170 aa)) form a self-association region. A phosphoserine mark is found at S32 and S88. Positions 85 to 122 (NSESLDQEHAKAQIAVSELRQREEEWRQKEEALVQREK) form a coiled coil. Positions 147–277 (KDTEDEDKSE…SRVRLYSQSQ (131 aa)) are self-association and interaction with Hsp90. Residues 267-337 (KSRVRLYSQS…DDEPKMMDTV (71 aa)) form an interaction with Hsp70 region. Residues 278 to 337 (SFQPMTVQNHVPHSGVGSIGLLESLPQNPDYLQYSINTALCSLNSVVHKEDDEPKMMDTV) form a required for interaction with STIP1 region.

It belongs to the CDC37 family. Self-associates. Forms complexes with Hsp70 and Hsp90. Interacts with CDC37, FKBP4, PPID and STIP1.

The protein localises to the cytoplasm. In terms of biological role, co-chaperone that binds to numerous proteins and promotes their interaction with Hsp70 and Hsp90. The sequence is that of Hsp90 co-chaperone Cdc37-like 1 (CDC37L1) from Pongo abelii (Sumatran orangutan).